Reading from the N-terminus, the 1001-residue chain is DNA topoisomerase 3-alpha (1001 aa).

The Toprim domain maps to 35–179; that stretch reads KVLCVAEKND…NLQVLRARFS (145 aa). Residues 197 to 617 form the Topo IA-type catalytic domain; that stretch reads DQRVSDAVDV…QQVQKYKQVF (421 aa). Catalysis depends on tyrosine 362, which acts as the O-(5'-phospho-DNA)-tyrosine intermediate. Residues 400–424 form a disordered region; it reads GGPTPRNGNKSDQAHPPIHPTKYTN. A C4-type zinc finger spans residues 658–685; that stretch reads CPQCNKDMVLKTKKNGGFYLSCMGFPEC. The segment covering 774-792 has biased composition (polar residues); that stretch reads RMDNSQHPQPADSRQTGSS. Residues 774-810 form a disordered region; that stretch reads RMDNSQHPQPADSRQTGSSKALAQTLPPPTAAGESNS. Cysteine 813, cysteine 815, cysteine 838, cysteine 843, cysteine 897, cysteine 899, cysteine 922, and cysteine 930 together coordinate Zn(2+). 2 consecutive GRF-type zinc fingers follow at residues 813 to 852 and 897 to 939; these read CNCGQEAVLLTVRKEGPNRGRQFFKCNGGSCNFFLWADSP and CLCS…VDEN. Residues 937–1001 are disordered; it reads DENTAPGTSG…HTRPFCPQNR (65 aa). Over residues 953 to 964 the composition is skewed to basic and acidic residues; sequence DRGRTLESEARS.

Belongs to the type IA topoisomerase family. In terms of assembly, binds ssDNA. Interacts (via N-terminal region) with BLM; the interaction is direct. Directly interacts with RMI1. Component of the RMI complex, containing at least TOP3A, RMI1 and RMI2. The RMI complex interacts with BLM. Mg(2+) is required as a cofactor. High expression is found in testis, heart, skeletal muscle and pancreas.

It is found in the mitochondrion matrix. It carries out the reaction ATP-independent breakage of single-stranded DNA, followed by passage and rejoining.. Functionally, releases the supercoiling and torsional tension of DNA introduced during the DNA replication and transcription by transiently cleaving and rejoining one strand of the DNA duplex. Introduces a single-strand break via transesterification at a target site in duplex DNA. The scissile phosphodiester is attacked by the catalytic tyrosine of the enzyme, resulting in the formation of a DNA-(5'-phosphotyrosyl)-enzyme intermediate and the expulsion of a 3'-OH DNA strand. The free DNA strand then undergoes passage around the unbroken strand thus removing DNA supercoils. Finally, in the religation step, the DNA 3'-OH attacks the covalent intermediate to expel the active-site tyrosine and restore the DNA phosphodiester backbone. As an essential component of the RMI complex it is involved in chromosome separation and the processing of homologous recombination intermediates to limit DNA crossover formation in cells. Has DNA decatenation activity. It is required for mtDNA decatenation and segregation after completion of replication, in a process that does not require BLM, RMI1 and RMI2. The polypeptide is DNA topoisomerase 3-alpha (TOP3A) (Homo sapiens (Human)).